The sequence spans 422 residues: Histidine--tRNA ligase (422 aa).

Belongs to the class-II aminoacyl-tRNA synthetase family. In terms of assembly, homodimer.

The protein localises to the cytoplasm. It carries out the reaction tRNA(His) + L-histidine + ATP = L-histidyl-tRNA(His) + AMP + diphosphate + H(+). The sequence is that of Histidine--tRNA ligase (hisS) from Photobacterium profundum (strain SS9).